The sequence spans 416 residues: Serine hydroxymethyltransferase (416 aa).

Residues Leu-121 and 125–127 (GHL) contribute to the (6S)-5,6,7,8-tetrahydrofolate site. Lys-230 is modified (N6-(pyridoxal phosphate)lysine). 355-357 (SPF) serves as a coordination point for (6S)-5,6,7,8-tetrahydrofolate.

This sequence belongs to the SHMT family. Homodimer. Requires pyridoxal 5'-phosphate as cofactor.

The protein resides in the cytoplasm. It catalyses the reaction (6R)-5,10-methylene-5,6,7,8-tetrahydrofolate + glycine + H2O = (6S)-5,6,7,8-tetrahydrofolate + L-serine. The protein operates within one-carbon metabolism; tetrahydrofolate interconversion. It functions in the pathway amino-acid biosynthesis; glycine biosynthesis; glycine from L-serine: step 1/1. Its function is as follows. Catalyzes the reversible interconversion of serine and glycine with tetrahydrofolate (THF) serving as the one-carbon carrier. This reaction serves as the major source of one-carbon groups required for the biosynthesis of purines, thymidylate, methionine, and other important biomolecules. Also exhibits THF-independent aldolase activity toward beta-hydroxyamino acids, producing glycine and aldehydes, via a retro-aldol mechanism. This is Serine hydroxymethyltransferase from Streptococcus thermophilus (strain CNRZ 1066).